The sequence spans 868 residues: Alanine--tRNA ligase (868 aa).

Zn(2+) contacts are provided by His-556, His-560, Cys-666, and His-670.

Belongs to the class-II aminoacyl-tRNA synthetase family. Zn(2+) is required as a cofactor.

It localises to the cytoplasm. It catalyses the reaction tRNA(Ala) + L-alanine + ATP = L-alanyl-tRNA(Ala) + AMP + diphosphate. In terms of biological role, catalyzes the attachment of alanine to tRNA(Ala) in a two-step reaction: alanine is first activated by ATP to form Ala-AMP and then transferred to the acceptor end of tRNA(Ala). Also edits incorrectly charged Ser-tRNA(Ala) and Gly-tRNA(Ala) via its editing domain. The polypeptide is Alanine--tRNA ligase (Elusimicrobium minutum (strain Pei191)).